Reading from the N-terminus, the 957-residue chain is Nitrite reductase [NAD(P)H] large subunit (957 aa).

44 to 79 (YDRVHLTEYFAGRSAESLSLVEGDFFTQHGIELRLS) lines the FAD pocket. 193–225 (LREKISELGVGVHTSKATTEIVRNEQGLQLNFR) contacts NAD(+). 4 residues coordinate [2Fe-2S] cluster: Cys423, Cys425, Cys457, and Cys460. [4Fe-4S] cluster-binding residues include Cys639, Cys645, Cys679, and Cys683. Cys683 contacts siroheme.

Belongs to the nitrite and sulfite reductase 4Fe-4S domain family. In terms of assembly, homodimer which associates with NirD. Siroheme serves as cofactor. The cofactor is [2Fe-2S] cluster. [4Fe-4S] cluster is required as a cofactor. Requires FAD as cofactor.

The catalysed reaction is NH4(+) + 3 NADP(+) + 2 H2O = nitrite + 3 NADPH + 5 H(+). The enzyme catalyses NH4(+) + 3 NAD(+) + 2 H2O = nitrite + 3 NADH + 5 H(+). It functions in the pathway nitrogen metabolism; nitrate reduction (assimilation). In Klebsiella oxytoca, this protein is Nitrite reductase [NAD(P)H] large subunit (nasB).